A 331-amino-acid polypeptide reads, in one-letter code: Tetraspanin-10 (331 aa).

Residues 1–34 are disordered; it reads MKEEECSPLLSQDTAGREHPLTRNSPPTANIPCP. At 1–76 the chain is on the cytoplasmic side; sequence MKEEECSPLL…LSTGSNCVKY (76 aa). The helical transmembrane segment at 77–97 threads the bilayer; it reads LIFLSNFLFSLPSLLALAAGL. The Extracellular segment spans residues 98–120; the sequence is WGLTVKRSQGIGWGGPVPTDPML. A helical membrane pass occupies residues 121–141; sequence MLVLGGLVVSVVSLSGCLGAF. Over 142 to 152 the chain is Cytoplasmic; the sequence is CENSCLLHWYC. The chain crosses the membrane as a helical span at residues 153–173; that stretch reads GAVLFCLALEALAGVLMVTLW. Residues 174-331 are Extracellular-facing; it reads KPLQDSLKYT…AAEDIEAGPL (158 aa). Disulfide bonds link Cys210-Cys277, Cys211-Cys241, Cys227-Cys235, and Cys242-Cys256. A glycan (N-linked (GlcNAc...) asparagine) is linked at Asn226.

It belongs to the tetraspanin (TM4SF) family. As to quaternary structure, interacts with ADAM10.

The protein resides in the cell membrane. Functionally, part of TspanC8 subgroup, composed of 6 members that interact with the transmembrane metalloprotease ADAM10. This interaction is required for ADAM10 exit from the endoplasmic reticulum and for enzymatic maturation and trafficking to the cell surface as well as substrate specificity. Different TspanC8/ADAM10 complexes have distinct substrates. This chain is Tetraspanin-10 (Tspan10), found in Mus musculus (Mouse).